We begin with the raw amino-acid sequence, 158 residues long: Phosphopantetheine adenylyltransferase (158 aa).

Serine 9 is a binding site for substrate. ATP contacts are provided by residues 9–10 (SF) and histidine 17. Residues lysine 41, valine 73, and lysine 87 each coordinate substrate. ATP contacts are provided by residues 88–90 (GLR), glutamate 98, and 122–128 (YSFVSSS).

This sequence belongs to the bacterial CoaD family. In terms of assembly, homohexamer. Mg(2+) serves as cofactor.

The protein resides in the cytoplasm. The enzyme catalyses (R)-4'-phosphopantetheine + ATP + H(+) = 3'-dephospho-CoA + diphosphate. Its pathway is cofactor biosynthesis; coenzyme A biosynthesis; CoA from (R)-pantothenate: step 4/5. Reversibly transfers an adenylyl group from ATP to 4'-phosphopantetheine, yielding dephospho-CoA (dPCoA) and pyrophosphate. The chain is Phosphopantetheine adenylyltransferase from Mycolicibacterium smegmatis (strain ATCC 700084 / mc(2)155) (Mycobacterium smegmatis).